A 374-amino-acid chain; its full sequence is uncharacterized protein (374 aa).

The span at 1–13 shows a compositional bias: basic and acidic residues; it reads METKYHEYDDVQT. Disordered stretches follow at residues 1–20, 91–193, and 236–374; these read METK…PSNK, SPMT…PLNQ, and KINN…SDFE. Residues 95–155 show a composition bias toward low complexity; the sequence is NNNNNNNNNN…NNSSNNNNNN (61 aa). Over residues 166–193 the composition is skewed to polar residues; sequence ISSNQSSPLSIYSTPPNPSSYVSSPLNQ. The span at 242–262 shows a compositional bias: pro residues; the sequence is APPPPPKACAPPPPPPPPPPI. Over residues 277–300 the composition is skewed to low complexity; sequence NNNNNNNNNNNSSNTNDSNNTNNT.

This is an uncharacterized protein from Dictyostelium discoideum (Social amoeba).